A 51-amino-acid polypeptide reads, in one-letter code: MGSNKPLGKKVRLAKALKQNRRVPLFVIVKTRGRVRFHPKMRYWRRKKLKA.

This sequence belongs to the eukaryotic ribosomal protein eL39 family.

This chain is Large ribosomal subunit protein eL39 (rpl39e), found in Methanocaldococcus jannaschii (strain ATCC 43067 / DSM 2661 / JAL-1 / JCM 10045 / NBRC 100440) (Methanococcus jannaschii).